The primary structure comprises 370 residues: Protein RecA (370 aa).

The tract at residues 1 to 20 is disordered; that stretch reads MSFEERRKKDSKESSSKEKD. ATP is bound at residue 78-85; sequence GPESSGKT.

Belongs to the RecA family.

Its subcellular location is the cytoplasm. In terms of biological role, can catalyze the hydrolysis of ATP in the presence of single-stranded DNA, the ATP-dependent uptake of single-stranded DNA by duplex DNA, and the ATP-dependent hybridization of homologous single-stranded DNAs. It interacts with LexA causing its activation and leading to its autocatalytic cleavage. This Prochlorococcus marinus (strain MIT 9515) protein is Protein RecA.